We begin with the raw amino-acid sequence, 791 residues long: Leucine-rich repeat-containing protein SOG2 (791 aa).

The interval 1 to 28 (MVATSSKRTLDPKEEHLPADKTSTNSSN) is disordered. A compositionally biased stretch (basic and acidic residues) spans 8 to 19 (RTLDPKEEHLPA). 6 LRR repeats span residues 43–64 (SGTT…DVGY), 67–88 (NVER…FKRL), 90–111 (RLQY…LTQC), 113–134 (QLEI…ISSF), 138–159 (NIRV…KSIT), and 163–183 (KLSI…DQVQ). Position 214 is a phosphothreonine (threonine 214). Disordered stretches follow at residues 454–506 (ASKA…TPSA) and 534–569 (HTHG…PRQQ). Positions 469–486 (SSSSITSGGGPAASTTST) are enriched in low complexity. Polar residues predominate over residues 544 to 569 (NAISNGSSQTNMNEVKTTSDTIPRQQ).

It localises to the cytoplasm. Its function is as follows. Required for proper cell morphogenesis and cell separation after mitosis. Functions in the RAM (regulation of ACE2 activity and cellular morphogenesis) signaling network and is required for proper ACE2 localization and CBK1 kinase activity. In Saccharomyces cerevisiae (strain ATCC 204508 / S288c) (Baker's yeast), this protein is Leucine-rich repeat-containing protein SOG2.